Consider the following 378-residue polypeptide: Isobutylamine N-hydroxylase (378 aa).

Exists in dimeric or trimeric form depending upon buffer conditions. It can form an isobutylamine N-hydroxylase two component enzyme system formed of a flavin reductase component (VlmR) and a monooxygenase component (VlmH).

It catalyses the reaction 2-methylpropan-1-amine + FADH2 + O2 = N-(2-methylpropyl)hydroxylamine + FAD + H2O + 2 H(+). The catalysed reaction is 2-methylpropan-1-amine + FMNH2 + O2 = N-(2-methylpropyl)hydroxylamine + FMN + H2O + 2 H(+). Its activity is regulated as follows. Inhibited by 5',5'-dithio-bis(2-nitrobenzoic acid) (DTNB) and 4-(hydroxymercuri)benzoic acid (p-HMB). Involved in the biosynthesis of the azoxy antibiotic valanimycin, which has an antitumor activity. Catalyzes the oxidation of isobutylamine to isobutylhydroxylamine via the formation of a flavin 4a-hydroperoxide. Unlike other known N-hydroxylases, isobutylamine N-hydroxylase cannot carry out the reduction of the flavin cofactor and requires the NADPH-flavin oxidoreductase VlmR. Also able to oxidize propan-1-amine, butan-1-amine, butan-2-amine and benzylamine. It has a similar activity with either FMNH(2) or FADH(2). This Streptomyces viridifaciens protein is Isobutylamine N-hydroxylase.